Reading from the N-terminus, the 166-residue chain is Large ribosomal subunit protein uL10 (166 aa).

It belongs to the universal ribosomal protein uL10 family. Part of the ribosomal stalk of the 50S ribosomal subunit. The N-terminus interacts with L11 and the large rRNA to form the base of the stalk. The C-terminus forms an elongated spine to which L12 dimers bind in a sequential fashion forming a multimeric L10(L12)X complex.

In terms of biological role, forms part of the ribosomal stalk, playing a central role in the interaction of the ribosome with GTP-bound translation factors. This is Large ribosomal subunit protein uL10 from Limosilactobacillus reuteri (strain DSM 20016) (Lactobacillus reuteri).